Reading from the N-terminus, the 146-residue chain is Monothiol glutaredoxin-5, mitochondrial (146 aa).

The region spanning 26–131 is the Glutaredoxin domain; that stretch reads RQALEQAVKE…KILKEINALA (106 aa). Lysine 43 provides a ligand contact to glutathione. Position 51 (cysteine 51) interacts with [2Fe-2S] cluster. Glutathione contacts are provided by residues 83 to 87, isoleucine 95, and 108 to 109; these read REGIK and SD.

It belongs to the glutaredoxin family. Monothiol subfamily. In terms of assembly, homodimer. Interacts with ISA1 and ISA2.

Its subcellular location is the mitochondrion. In terms of biological role, monothiol glutaredoxin involved in mitochondrial iron-sulfur (Fe/S) cluster transfer. Receives 2Fe/2S clusters from scaffold protein isu1 and mediates their transfer to apoproteins, to the 4Fe/FS cluster biosynthesis machinery, or export from mitochondrion. This is Monothiol glutaredoxin-5, mitochondrial from Schizosaccharomyces pombe (strain 972 / ATCC 24843) (Fission yeast).